The primary structure comprises 373 residues: Spore germination protein KB (373 aa).

The next 10 membrane-spanning stretches (helical) occupy residues 11 to 31 (LFVM…PGSM), 37 to 57 (WIAV…YQGI), 78 to 98 (LSWL…ARVL), 105 to 125 (LLTF…LMVV), 143 to 163 (LLFG…IVSG), 185 to 205 (VFTQ…MIFP), 219 to 239 (IAMA…ISVL), 269 to 289 (VFFM…YLYA), 306 to 326 (LAYP…TNFS), and 338 to 358 (LYIH…VAVW).

This sequence belongs to the amino acid-polyamine-organocation (APC) superfamily. Spore germination protein (SGP) (TC 2.A.3.9) family.

The protein resides in the cell membrane. Involved in the germination response to the combination of glucose, fructose, L-asparagine, and KCl. The chain is Spore germination protein KB (gerKB) from Bacillus subtilis (strain 168).